A 186-amino-acid chain; its full sequence is Intraflagellar transport protein 27 homolog (186 aa).

GTP is bound by residues 12–19 (GDPAVGKT), 64–68 (DSAGK), and 123–126 (NKTD).

This sequence belongs to the small GTPase superfamily. Rab family. In terms of assembly, component of the IFT complex B, at least composed of IFT20, IFT25, IFT27, IFT52, IFT57, IFT74, IFT81, IFT88 and TRAF3IP1. Interacts with IFT25. Interacts with IFT70B. Interacts with RABL2/RABL2A; binding is equal in the presence of GTP or GDP. Interacts with ARL6; recognizes and binds with the GTP-free form of ARL6.

The protein resides in the cell projection. It is found in the cilium. It localises to the cytoplasm. Its subcellular location is the flagellum. Small GTPase-like component of the intraflagellar transport (IFT) complex B that promotes the exit of the BBSome complex from cilia via its interaction with ARL6. Not involved in entry of the BBSome complex into cilium. Prevents aggregation of GTP-free ARL6. Required for hedgehog signaling. Forms a subcomplex within the IFT complex B with IFT25. Its role in intraflagellar transport is mainly seen in tissues rich in ciliated cells such as kidney and testis. Essential for male fertility, spermiogenesis and sperm flagella formation. Plays a role in the early development of the kidney. May be involved in the regulation of ureteric bud initiation. This is Intraflagellar transport protein 27 homolog (IFT27) from Homo sapiens (Human).